The sequence spans 458 residues: tRNA modification GTPase MnmE (458 aa).

Arg-32, Glu-89, and Lys-128 together coordinate (6S)-5-formyl-5,6,7,8-tetrahydrofolate. The 158-residue stretch at Gly-224–Gly-381 folds into the TrmE-type G domain. Asn-234 serves as a coordination point for K(+). GTP contacts are provided by residues Asn-234–Ser-239, Thr-253–Thr-259, and Asp-278–Gly-281. Ser-238 provides a ligand contact to Mg(2+). K(+) is bound by residues Thr-253, Val-255, and Thr-258. Thr-259 provides a ligand contact to Mg(2+). Lys-458 is a (6S)-5-formyl-5,6,7,8-tetrahydrofolate binding site.

The protein belongs to the TRAFAC class TrmE-Era-EngA-EngB-Septin-like GTPase superfamily. TrmE GTPase family. As to quaternary structure, homodimer. Heterotetramer of two MnmE and two MnmG subunits. The cofactor is K(+).

The protein resides in the cytoplasm. Exhibits a very high intrinsic GTPase hydrolysis rate. Involved in the addition of a carboxymethylaminomethyl (cmnm) group at the wobble position (U34) of certain tRNAs, forming tRNA-cmnm(5)s(2)U34. The polypeptide is tRNA modification GTPase MnmE (Nitrosococcus oceani (strain ATCC 19707 / BCRC 17464 / JCM 30415 / NCIMB 11848 / C-107)).